A 172-amino-acid chain; its full sequence is Acetolactate synthase small subunit (172 aa).

One can recognise an ACT domain in the interval 4 to 78 (TLSVLVEDEA…NVIKVQDITE (75 aa)).

It belongs to the acetolactate synthase small subunit family. As to quaternary structure, dimer of large and small chains.

It catalyses the reaction 2 pyruvate + H(+) = (2S)-2-acetolactate + CO2. Its pathway is amino-acid biosynthesis; L-isoleucine biosynthesis; L-isoleucine from 2-oxobutanoate: step 1/4. The protein operates within amino-acid biosynthesis; L-valine biosynthesis; L-valine from pyruvate: step 1/4. The polypeptide is Acetolactate synthase small subunit (ilvH) (Synechocystis sp. (strain ATCC 27184 / PCC 6803 / Kazusa)).